We begin with the raw amino-acid sequence, 302 residues long: Glycine--tRNA ligase alpha subunit (302 aa).

Belongs to the class-II aminoacyl-tRNA synthetase family. In terms of assembly, tetramer of two alpha and two beta subunits.

Its subcellular location is the cytoplasm. The catalysed reaction is tRNA(Gly) + glycine + ATP = glycyl-tRNA(Gly) + AMP + diphosphate. In Baumannia cicadellinicola subsp. Homalodisca coagulata, this protein is Glycine--tRNA ligase alpha subunit.